The sequence spans 207 residues: Outer-membrane lipoprotein carrier protein (207 aa).

The first 23 residues, 1 to 23 (MMKPHNLFQFLAVCSLTVAVASA), serve as a signal peptide directing secretion.

This sequence belongs to the LolA family. As to quaternary structure, monomer.

Its subcellular location is the periplasm. Its function is as follows. Participates in the translocation of lipoproteins from the inner membrane to the outer membrane. Only forms a complex with a lipoprotein if the residue after the N-terminal Cys is not an aspartate (The Asp acts as a targeting signal to indicate that the lipoprotein should stay in the inner membrane). The protein is Outer-membrane lipoprotein carrier protein of Neisseria gonorrhoeae (strain ATCC 700825 / FA 1090).